The chain runs to 370 residues: MSNKDIRVVVGMSGGVDSSVTAHVLKDQGYDVIGIFMKNWDDTDENGVCTATEDYNDVIAVCNQIGIPYYAVNFEQEYWDKVFTYFLDEYKKGRTPNPDVMCNKEIKFKAFLEHALKLGADYVATGHYARIRRHDDGHVEMLRGVDNNKDQTYFLNQLSQQQLSKVMFPIGDIDKKEVRKIAEEQDLATAKKKDSTGICFIGERNFKTFLSQYLPAQSGEMRTLNGDKMGMHSGLMYYTIGQRHGLGIGGDGDPWFVVGKNLEDNILYVEQGFHHDALYSDYLIASDFSFVNPVDLDNGFECTAKFRYRQKDTKVFVQRESQNALRVTFDEPVRAITPGQAVVFYDEEVCLGGATIDDVFKTTGQLSYVV.

Residues 11 to 18 (GMSGGVDS) and Met-37 contribute to the ATP site. The tract at residues 97 to 99 (NPD) is interaction with target base in tRNA. Catalysis depends on Cys-102, which acts as the Nucleophile. A disulfide bond links Cys-102 and Cys-199. Residue Gly-126 participates in ATP binding. The tract at residues 149–151 (KDQ) is interaction with tRNA. Catalysis depends on Cys-199, which acts as the Cysteine persulfide intermediate. Positions 307-308 (RY) are interaction with tRNA.

This sequence belongs to the MnmA/TRMU family.

Its subcellular location is the cytoplasm. It catalyses the reaction S-sulfanyl-L-cysteinyl-[protein] + uridine(34) in tRNA + AH2 + ATP = 2-thiouridine(34) in tRNA + L-cysteinyl-[protein] + A + AMP + diphosphate + H(+). In terms of biological role, catalyzes the 2-thiolation of uridine at the wobble position (U34) of tRNA, leading to the formation of s(2)U34. In Staphylococcus haemolyticus (strain JCSC1435), this protein is tRNA-specific 2-thiouridylase MnmA.